Here is a 229-residue protein sequence, read N- to C-terminus: Cytidylate kinase (229 aa).

ATP is bound at residue 12–20; the sequence is GPSGAGKGT.

It belongs to the cytidylate kinase family. Type 1 subfamily.

The protein localises to the cytoplasm. It carries out the reaction CMP + ATP = CDP + ADP. The catalysed reaction is dCMP + ATP = dCDP + ADP. This Pseudomonas paraeruginosa (strain DSM 24068 / PA7) (Pseudomonas aeruginosa (strain PA7)) protein is Cytidylate kinase.